The chain runs to 654 residues: Hemagglutinin-esterase-fusion glycoprotein (654 aa).

Positions 1-14 (MFFSLLLMLGLTEA) are cleaved as a signal peptide. The tract at residues 15-40 (EKIKICLQKQVNSSFSLHNGFGGNLY) is fusion domain-1. Residues 15-629 (EKIKICLQKQ…QSDPFYWGSS (615 aa)) are Extracellular-facing. 4 cysteine pairs are disulfide-bonded: C20–C582, C209–C251, C228–C315, and C236–C288. N-linked (GlcNAc...) asparagine; by host glycans are attached at residues N26 and N61. Residues 41–157 (ATEEKRMFEL…KLNFQKSIYE (117 aa)) form an esterase domain-1 region. S71 serves as the catalytic Nucleophile. 2 N-linked (GlcNAc...) asparagine; by host glycosylation sites follow: N143 and N188. The interval 157 to 309 (ELASQSHCMS…VRSSPRFLLM (153 aa)) is N-acetyl-9-O-acetylneuraminic acid binding. Residues 309 to 363 (MPERSYCFDMKEKGPVTAVQSIWGKGRKSDYAVDQACLSTPGCMLIQKQKPYIGE) form an esterase domain-2 region. The segment at 364–654 (ADDHHGDQEM…ISGIAICRTK (291 aa)) is fusion domain-2. Catalysis depends on charge relay system residues D365 and H368. N394, N551, and N602 each carry an N-linked (GlcNAc...) asparagine; by host glycan. A helical membrane pass occupies residues 630 to 650 (LGLAITAANLMAALVISGIAI). Topologically, residues 651 to 654 (CRTK) are cytoplasmic.

Belongs to the influenza viruses hemagglutinin family. Homotrimer of disulfide-linked HEF1-HEF2. In natural infection, inactive HEF is matured into HEF1 and HEF2 outside the cell by one or more trypsin-like, arginine-specific endoprotease.

It localises to the virion membrane. It is found in the host cell membrane. The enzyme catalyses N-acetyl-9-O-acetylneuraminate + H2O = N-acetylneuraminate + acetate + H(+). The catalysed reaction is N-acetyl-4-O-acetylneuraminate + H2O = N-acetylneuraminate + acetate + H(+). Its function is as follows. Binds to the N-acetyl-9-O-acetylneuraminic acid residues on the cell surface, bringing about the attachment of the virus particle to the cell. Plays a major role in the determination of host range restriction and virulence. Class I viral fusion protein. Responsible for penetration of the virus into the cell cytoplasm by mediating the fusion of the membrane of the endocytosed virus particle with the endosomal membrane. Low pH in endosomes induce an irreversible conformational change in HEF2, releasing the fusion hydrophobic peptide. Several trimers are required to form a competent fusion pore. Displays a receptor-destroying activity which is a neuraminidate-O-acetyl esterase. This activity cleaves off any receptor on the cell surface, which would otherwise prevent virions release. These cleavages prevent self-aggregation and ensure the efficient spread of the progeny virus from cell to cell. This is Hemagglutinin-esterase-fusion glycoprotein from Influenza C virus (strain C/California/1978).